Reading from the N-terminus, the 53-residue chain is Light-harvesting protein B-808/866 beta chain (53 aa).

An N-formylmethionine modification is found at methionine 1. Residues 1-25 lie on the Cytoplasmic side of the membrane; that stretch reads MRDDDDLVPPKWRPLFNNQDWLLHD. Residues histidine 24 and histidine 42 each coordinate a bacteriochlorophyll. A helical membrane pass occupies residues 26–48; sequence IVVKSFYGFGVIAAIAHLLVYLW. Over 49-53 the chain is Periplasmic; sequence KPWLP.

Belongs to the antenna complex beta subunit family. As to quaternary structure, the core complex is formed by different alpha and beta chains, binding bacteriochlorophyll molecules, and arranged most probably in tetrameric structures disposed around the reaction center. The non-pigmented gamma chains may constitute additional components.

Its subcellular location is the cell membrane. Antenna complexes are light-harvesting systems, which transfer the excitation energy to the reaction centers. This is Light-harvesting protein B-808/866 beta chain (puf2B) from Chloroflexus aurantiacus (strain ATCC 29366 / DSM 635 / J-10-fl).